The following is a 326-amino-acid chain: Tetraacyldisaccharide 4'-kinase (326 aa).

ATP is bound at residue 55-62 (TAGGNGKT).

It belongs to the LpxK family.

It catalyses the reaction a lipid A disaccharide + ATP = a lipid IVA + ADP + H(+). It functions in the pathway glycolipid biosynthesis; lipid IV(A) biosynthesis; lipid IV(A) from (3R)-3-hydroxytetradecanoyl-[acyl-carrier-protein] and UDP-N-acetyl-alpha-D-glucosamine: step 6/6. In terms of biological role, transfers the gamma-phosphate of ATP to the 4'-position of a tetraacyldisaccharide 1-phosphate intermediate (termed DS-1-P) to form tetraacyldisaccharide 1,4'-bis-phosphate (lipid IVA). In Serratia proteamaculans (strain 568), this protein is Tetraacyldisaccharide 4'-kinase.